Reading from the N-terminus, the 25-residue chain is Ranatuerin-1 (25 aa).

A disulfide bond links cysteine 19 and cysteine 25.

This sequence belongs to the frog skin active peptide (FSAP) family. Ranatuerin subfamily. As to expression, expressed by the skin glands.

Its subcellular location is the secreted. In terms of biological role, antibacterial activity against Gram-positive bacterium S.aureus (MIC=50 uM) and Gram-negative bacterium E.coli (MIC=2 uM). Has activity against C.albicans (MIC=70 uM). Shows no detectable hemolytic activity towards human erythrocytes. The polypeptide is Ranatuerin-1 (Aquarana catesbeiana (American bullfrog)).